We begin with the raw amino-acid sequence, 138 residues long: Small ribosomal subunit protein uS8c (138 aa).

The protein belongs to the universal ribosomal protein uS8 family. As to quaternary structure, part of the 30S ribosomal subunit.

The protein resides in the plastid. Its subcellular location is the chloroplast. One of the primary rRNA binding proteins, it binds directly to 16S rRNA central domain where it helps coordinate assembly of the platform of the 30S subunit. This chain is Small ribosomal subunit protein uS8c (rps8), found in Chlorella vulgaris (Green alga).